A 114-amino-acid chain; its full sequence is MAVNLYDYANQLEQALRDSDEYKAIKDAFAKVKENEESKKLFDEFRETQMSFQQKQMQGEEIPEEDLQKAQEQAQAIEKDENISELMNAEQKMSQVFQEINQIIVKPLDEIYAD.

It belongs to the UPF0342 family.

The sequence is that of UPF0342 protein SERP1381 from Staphylococcus epidermidis (strain ATCC 35984 / DSM 28319 / BCRC 17069 / CCUG 31568 / BM 3577 / RP62A).